A 424-amino-acid polypeptide reads, in one-letter code: Gamma-glutamyl phosphate reductase (424 aa).

Belongs to the gamma-glutamyl phosphate reductase family.

It localises to the cytoplasm. It catalyses the reaction L-glutamate 5-semialdehyde + phosphate + NADP(+) = L-glutamyl 5-phosphate + NADPH + H(+). The protein operates within amino-acid biosynthesis; L-proline biosynthesis; L-glutamate 5-semialdehyde from L-glutamate: step 2/2. Functionally, catalyzes the NADPH-dependent reduction of L-glutamate 5-phosphate into L-glutamate 5-semialdehyde and phosphate. The product spontaneously undergoes cyclization to form 1-pyrroline-5-carboxylate. The polypeptide is Gamma-glutamyl phosphate reductase (Parvibaculum lavamentivorans (strain DS-1 / DSM 13023 / NCIMB 13966)).